The following is a 163-amino-acid chain: 2-amino-4-hydroxy-6-hydroxymethyldihydropteridine pyrophosphokinase (163 aa).

This sequence belongs to the HPPK family.

The catalysed reaction is 6-hydroxymethyl-7,8-dihydropterin + ATP = (7,8-dihydropterin-6-yl)methyl diphosphate + AMP + H(+). The protein operates within cofactor biosynthesis; tetrahydrofolate biosynthesis; 2-amino-4-hydroxy-6-hydroxymethyl-7,8-dihydropteridine diphosphate from 7,8-dihydroneopterin triphosphate: step 4/4. Functionally, catalyzes the transfer of pyrophosphate from adenosine triphosphate (ATP) to 6-hydroxymethyl-7,8-dihydropterin, an enzymatic step in folate biosynthesis pathway. This is 2-amino-4-hydroxy-6-hydroxymethyldihydropteridine pyrophosphokinase (folK) from Helicobacter pylori (strain ATCC 700392 / 26695) (Campylobacter pylori).